A 302-amino-acid chain; its full sequence is Endochitinase 2 (302 aa).

Positions 1-42 constitute a Chitin-binding type-1 domain; sequence EQCGRQAGGALCPGGLCCSQFGWCGSTADYCTVPGCQSQCSG. Disulfide bonds link Cys3–Cys18, Cys12–Cys24, Cys17–Cys31, Cys36–Cys40, Cys73–Cys136, Cys148–Cys156, and Cys255–Cys287. Residue Glu117 is the Proton donor of the active site. The propeptide at 296–302 is removed in mature form; that stretch reads GVSVDSM.

It belongs to the glycosyl hydrolase 19 family. Chitinase class I subfamily.

The catalysed reaction is Random endo-hydrolysis of N-acetyl-beta-D-glucosaminide (1-&gt;4)-beta-linkages in chitin and chitodextrins.. In terms of biological role, defense against chitin-containing fungal pathogens. This Gossypium hirsutum (Upland cotton) protein is Endochitinase 2.